The sequence spans 702 residues: Polyribonucleotide nucleotidyltransferase (702 aa).

2 residues coordinate Mg(2+): Asp485 and Asp491. The 61-residue stretch at 552–612 folds into the KH domain; it reads PRTEIICIDP…EGVKKAISII (61 aa). The S1 motif domain occupies 622–690; it reads GEIYLGKVTK…NQGRINLSRK (69 aa).

It belongs to the polyribonucleotide nucleotidyltransferase family. It depends on Mg(2+) as a cofactor.

The protein resides in the cytoplasm. It carries out the reaction RNA(n+1) + phosphate = RNA(n) + a ribonucleoside 5'-diphosphate. Involved in mRNA degradation. Catalyzes the phosphorolysis of single-stranded polyribonucleotides processively in the 3'- to 5'-direction. The chain is Polyribonucleotide nucleotidyltransferase from Clostridium botulinum (strain ATCC 19397 / Type A).